A 55-amino-acid chain; its full sequence is uncharacterized protein (55 aa).

Residues 1–15 (MVGQEQLESSPLCQH) are compositionally biased toward polar residues. Residues 1–26 (MVGQEQLESSPLCQHSDNETETKREC) form a disordered region. The span at 16-26 (SDNETETKREC) shows a compositional bias: basic and acidic residues.

This is an uncharacterized protein from Escherichia coli (strain K12).